The primary structure comprises 229 residues: tRNA (guanine-N(1)-)-methyltransferase (229 aa).

S-adenosyl-L-methionine contacts are provided by residues glycine 109 and 129–134 (IGDFIL).

It belongs to the RNA methyltransferase TrmD family. Homodimer.

It is found in the cytoplasm. It catalyses the reaction guanosine(37) in tRNA + S-adenosyl-L-methionine = N(1)-methylguanosine(37) in tRNA + S-adenosyl-L-homocysteine + H(+). Its function is as follows. Specifically methylates guanosine-37 in various tRNAs. This chain is tRNA (guanine-N(1)-)-methyltransferase, found in Helicobacter pylori (strain Shi470).